A 557-amino-acid chain; its full sequence is Membrane protein insertase YidC (557 aa).

5 consecutive transmembrane segments (helical) span residues 6 to 26 (TILW…WQVH), 219 to 239 (IGPF…IYTD), 367 to 387 (IVGN…LAFF), 437 to 457 (LGGC…YWVL), and 514 to 534 (MPIV…LYWV).

Belongs to the OXA1/ALB3/YidC family. Type 1 subfamily. In terms of assembly, interacts with the Sec translocase complex via SecD. Specifically interacts with transmembrane segments of nascent integral membrane proteins during membrane integration.

It is found in the cell inner membrane. Its function is as follows. Required for the insertion and/or proper folding and/or complex formation of integral membrane proteins into the membrane. Involved in integration of membrane proteins that insert both dependently and independently of the Sec translocase complex, as well as at least some lipoproteins. Aids folding of multispanning membrane proteins. This chain is Membrane protein insertase YidC, found in Polynucleobacter asymbioticus (strain DSM 18221 / CIP 109841 / QLW-P1DMWA-1) (Polynucleobacter necessarius subsp. asymbioticus).